Reading from the N-terminus, the 444-residue chain is 3-phosphoshikimate 1-carboxyvinyltransferase (444 aa).

3-phosphoshikimate is bound by residues Lys29, Ser30, and Arg34. A phosphoenolpyruvate-binding site is contributed by Lys29. The phosphoenolpyruvate site is built by Gly102 and Arg131. 3-phosphoshikimate is bound by residues Ser176, Gln178, Asp326, and Lys353. Residue Gln178 coordinates phosphoenolpyruvate. The active-site Proton acceptor is the Asp326. Positions 357 and 399 each coordinate phosphoenolpyruvate.

Belongs to the EPSP synthase family. As to quaternary structure, monomer.

It localises to the cytoplasm. The enzyme catalyses 3-phosphoshikimate + phosphoenolpyruvate = 5-O-(1-carboxyvinyl)-3-phosphoshikimate + phosphate. Its pathway is metabolic intermediate biosynthesis; chorismate biosynthesis; chorismate from D-erythrose 4-phosphate and phosphoenolpyruvate: step 6/7. Catalyzes the transfer of the enolpyruvyl moiety of phosphoenolpyruvate (PEP) to the 5-hydroxyl of shikimate-3-phosphate (S3P) to produce enolpyruvyl shikimate-3-phosphate and inorganic phosphate. The chain is 3-phosphoshikimate 1-carboxyvinyltransferase from Synechococcus sp. (strain JA-3-3Ab) (Cyanobacteria bacterium Yellowstone A-Prime).